The primary structure comprises 307 residues: Delta-9 acyl-lipid desaturase 2 (307 aa).

Residues 1-17 are compositionally biased toward polar residues; the sequence is MSVTSTVEENHQKNPST. A disordered region spans residues 1–21; sequence MSVTSTVEENHQKNPSTPAAV. Residues 53-73 traverse the membrane as a helical segment; that stretch reads LALLAPFYFTWSALWVTFLFY. 2 residues coordinate Fe cation: His85 and His90. Residues 85-90 carry the Histidine box-1 motif; the sequence is HRNLAH. The helical transmembrane segment at 99-119 threads the bilayer; it reads LEYLLAYCALLAIQGDPIDWV. Fe cation-binding residues include His122, His125, and His126. The Histidine box-2 signature appears at 122–126; the sequence is HRYHH. The next 2 membrane-spanning stretches (helical) occupy residues 182–202 and 204–224; these read VLFHILGLGFFLFYLGGMSFV and WGMGVGAALEVHVTCLINSLC. Fe cation contacts are provided by His225, His254, His257, and His258. A Histidine box-3 motif is present at residues 254–258; sequence HNNHH.

Belongs to the fatty acid desaturase type 1 family. It depends on Fe cation as a cofactor. In terms of tissue distribution, strongly expressed in flowers, roots, leaves, seedpods, and inflorescence meristems.

The protein localises to the endoplasmic reticulum membrane. The enzyme catalyses a 1-hexacosanoyl-2-acyl-phosphoglycerolipid + 2 Fe(II)-[cytochrome b5] + O2 + 2 H(+) = a 1-[(17Z)-hexacos-17-enoyl]-2-acyl-phosphoglycerolipid + 2 Fe(III)-[cytochrome b5] + 2 H2O. It carries out the reaction a 1-tetracosanoyl-2-acyl-phosphoglycerolipid + 2 Fe(II)-[cytochrome b5] + O2 + 2 H(+) = a 1-[(15Z)-tetracos-15-enoyl]-2-acyl-phosphoglycerolipid + 2 Fe(III)-[cytochrome b5] + 2 H2O. Its pathway is lipid metabolism; polyunsaturated fatty acid biosynthesis. Its function is as follows. Involved in delta-9 desaturation of fatty acids. Plays a role in the production of very-long-chain monounsaturated fatty acids (VLCMUFAs) in seed lipids and in membrane phospholipids and sphingolipids. Acts as C-16:0 desaturase for monogalactosyl diacylglycerol (MGDG) and phosphatidylglycerol (PG). Is an essential component for cold adaptation. Is essential to adjust the acyl composition of organelle membrane lipid composition in response to cold stress. The chain is Delta-9 acyl-lipid desaturase 2 from Arabidopsis thaliana (Mouse-ear cress).